Here is a 451-residue protein sequence, read N- to C-terminus: Opioid growth factor receptor-like protein 1 (451 aa).

2 disordered regions span residues 1–89 (MGNL…TAKP) and 308–451 (ENFI…VLVQ). Low complexity predominate over residues 43–66 (PGQESEQPAQPPEQAGGRPGASPA). A compositionally biased stretch (polar residues) spans 322-341 (GSKAQKMSSPLASSHNSQTS). 2 stretches are compositionally biased toward basic and acidic residues: residues 362-381 (TAEDKKVAPKEPVEETDRPS) and 389-399 (AKPRNTEKDSN). Residues 431–443 (NDNQDNENPGNTN) show a composition bias toward low complexity.

The protein belongs to the opioid growth factor receptor family. In terms of tissue distribution, ubiquitous.

The sequence is that of Opioid growth factor receptor-like protein 1 (OGFRL1) from Homo sapiens (Human).